A 76-amino-acid polypeptide reads, in one-letter code: Endothelin-1 (76 aa).

The tract at residues 30–44 (CQCASQKDKKCWNFC) is endothelin-like.

The protein belongs to the endothelin/sarafotoxin family.

It localises to the secreted. In terms of biological role, endothelins are endothelium-derived vasoconstrictor peptides. Probable ligand for G-protein coupled receptors EDNRA and EDNRB which activates PTK2B, BCAR1, BCAR3 and, GTPases RAP1 and RHOA cascade in glomerular mesangial cells. Also binds the DEAR/FBXW7-AS1 receptor. Promotes mesenteric arterial wall remodeling via activation of ROCK signaling and subsequent colocalization of NFATC3 with F-actin filaments. NFATC3 then translocates to the nucleus where it subsequently promotes the transcription of the smooth muscle hypertrophy and differentiation marker ACTA2. The chain is Endothelin-1 (EDN1) from Macaca fascicularis (Crab-eating macaque).